Consider the following 267-residue polypeptide: Chaperone protein MyfB (267 aa).

Residues 1 to 34 (MKYKFSHNFISYNLFLFVFMSLILLPYSHASSMG) form the signal peptide. Cys-127 and Cys-164 are joined by a disulfide.

This sequence belongs to the periplasmic pilus chaperone family.

The protein resides in the periplasm. Required for the biogenesis of the MyfA fimbria. The polypeptide is Chaperone protein MyfB (myfB) (Yersinia enterocolitica).